A 411-amino-acid polypeptide reads, in one-letter code: Potassium channel subfamily K member 3 (411 aa).

At 1–8 (MKRQNVRT) the chain is on the cytoplasmic side. The helical transmembrane segment at 9–29 (LALIVCTFTYLLVGAAVFDAL) threads the bilayer. The N-linked (GlcNAc...) asparagine glycan is linked to Asn53. Residues 78 to 101 (WRFAGSFYFAITVITTIGYGHAAP) constitute an intramembrane region (pore-forming). Residues 108–128 (VFCMFYALLGIPLTLVMFQSL) form a helical membrane-spanning segment. Over 129–158 (GERINTFVRYLLHRAKRGLGMRHAEVSMAN) the chain is Cytoplasmic. The helical transmembrane segment at 159 to 179 (MVLIGFVSCISTLCIGAAAFS) threads the bilayer. Residues 184–207 (WTFFQAYYYCFITLTTIGFGDYVA) constitute an intramembrane region (pore-forming). A helical transmembrane segment spans residues 223 to 243 (FSFVYILTGLTVIGAFLNLVV). Topologically, residues 244-411 (LRFMTMNAED…RGLMKRRSSV (168 aa)) are cytoplasmic.

It belongs to the two pore domain potassium channel (TC 1.A.1.8) family. Homodimer. Heterodimer with KCNK1. Heterodimer with KCNK9. As to expression, strongest expression in heart. Moderate expression in lung and brain. Low levels in liver, kidney and skeletal muscle. Expressed in cerebellar granule cells (at protein level).

The protein localises to the cell membrane. It carries out the reaction K(+)(in) = K(+)(out). It catalyses the reaction Na(+)(in) = Na(+)(out). Its activity is regulated as follows. Inhibited by extracellular acidification, muscarinic signaling, divalent metal cations Zn(2+) and Ba(2+), isoflurane, bupivacaine and phenytoin. Activated by protein kinase A. Ruthenium red resistant. Its function is as follows. K(+) channel that conducts voltage-dependent outward rectifying currents upon membrane depolarization. Voltage sensing is coupled to K(+) electrochemical gradient in an 'ion flux gating' mode where outward but not inward ion flow opens the gate. Changes ion selectivity and becomes permeable to Na(+) ions in response to extracellular acidification. Protonation of the pH sensor His-98 stabilizes C-type inactivation conformation likely converting the channel from outward K(+)-conducting, to inward Na(+)-conducting to nonconductive state. Homo- and heterodimerizes to form functional channels with distinct regulatory and gating properties. Allows K(+) currents with fast-gating kinetics important for the repolarization and hyperpolarization phases of action potentials. In cerebellar granule cells, heteromeric KCNK3:KCNK9 channel may hyperpolarize the resting membrane potential to limit intrinsic neuronal excitability, but once the action potential threshold is reached, it may support high-frequency action potential firing and increased neuronal excitability. Dispensable for central chemosensory respiration i.e. breathing controlled by brainstem CO2/pH, it rather conducts pH-sensitive currents and controls the firing rate of serotonergic raphe neurons involved in potentiation of the respiratory chemoreflex. Additionally, imparts chemosensitivity to type 1 cells in carotid bodies which respond to a decrease in arterial oxygen pressure or an increase in carbon dioxide pressure or pH to initiate adaptive changes in pulmonary ventilation. In adrenal gland, contributes to the maintenance of a hyperpolarized resting membrane potential of aldosterone-producing cells at zona glomerulosa and limits aldosterone release as part of a regulatory mechanism that controls arterial blood pressure and electrolyte homeostasis. In brown adipocytes, mediates K(+) efflux that counteracts norepinephrine-induced membrane depolarization, limits Ca(2+) efflux and downstream cAMP and PKA signaling, ultimately attenuating lipid oxidation and adaptive thermogenesis. The protein is Potassium channel subfamily K member 3 of Rattus norvegicus (Rat).